We begin with the raw amino-acid sequence, 427 residues long: Adenylosuccinate synthetase (427 aa).

Residues Gly12–Lys18 and Gly40–Thr42 contribute to the GTP site. Residue Asp13 is the Proton acceptor of the active site. Mg(2+)-binding residues include Asp13 and Gly40. IMP-binding positions include Asp13–Lys16, Asn38–His41, Thr130, Arg144, Gln224, Thr239, and Arg303. His41 (proton donor) is an active-site residue. Residue Val299 to Arg305 coordinates substrate. GTP is bound by residues Arg305, Lys331–Asp333, and Ser413–Gly415.

It belongs to the adenylosuccinate synthetase family. In terms of assembly, homodimer. Mg(2+) serves as cofactor.

Its subcellular location is the cytoplasm. It catalyses the reaction IMP + L-aspartate + GTP = N(6)-(1,2-dicarboxyethyl)-AMP + GDP + phosphate + 2 H(+). The protein operates within purine metabolism; AMP biosynthesis via de novo pathway; AMP from IMP: step 1/2. In terms of biological role, plays an important role in the de novo pathway of purine nucleotide biosynthesis. Catalyzes the first committed step in the biosynthesis of AMP from IMP. The protein is Adenylosuccinate synthetase of Clostridium novyi (strain NT).